Reading from the N-terminus, the 175-residue chain is Bifunctional protein PyrR (175 aa).

Substrate-binding positions include T40–R41, D102–T110, R135, and V159. A PRPP-binding motif is present at residues V98–T110.

It belongs to the purine/pyrimidine phosphoribosyltransferase family. PyrR subfamily. As to quaternary structure, homodimer and homohexamer; in equilibrium.

It catalyses the reaction UMP + diphosphate = 5-phospho-alpha-D-ribose 1-diphosphate + uracil. In terms of biological role, regulates transcriptional attenuation of the pyrimidine nucleotide (pyr) operon by binding in a uridine-dependent manner to specific sites on pyr mRNA. This disrupts an antiterminator hairpin in the RNA and favors formation of a downstream transcription terminator, leading to a reduced expression of downstream genes. Its function is as follows. Also displays a weak uracil phosphoribosyltransferase activity which is not physiologically significant. This is Bifunctional protein PyrR from Staphylococcus epidermidis (strain ATCC 12228 / FDA PCI 1200).